A 324-amino-acid chain; its full sequence is Histidine N-acetyltransferase (324 aa).

Positions 15–151 constitute an N-acetyltransferase domain; sequence FEFVLAAEKE…GILLLSFNAP (137 aa).

The enzyme catalyses L-histidine + acetyl-CoA = N(alpha)-acetyl-L-histidine + CoA + H(+). Its function is as follows. Enzyme responsible for the N-acetyl-histidine (NAH) synthesis, which is a major constituent of brain and lens of ectothermic vertebrates. This is Histidine N-acetyltransferase (hisat) from Xenopus tropicalis (Western clawed frog).